Here is a 536-residue protein sequence, read N- to C-terminus: Xylulose kinase (536 aa).

Residues H99, R170, D280, and N281 each contribute to the substrate site. ATP-binding positions include W355, 441 to 442, and N445; that span reads GA.

It belongs to the FGGY kinase family. As to quaternary structure, monomer.

It carries out the reaction D-xylulose + ATP = D-xylulose 5-phosphate + ADP + H(+). In terms of biological role, phosphorylates D-xylulose to produce D-xylulose 5-phosphate, a molecule that may play an important role in the regulation of glucose metabolism and lipogenesis. The sequence is that of Xylulose kinase (XYLB) from Homo sapiens (Human).